The sequence spans 330 residues: 2-oxoisovalerate dehydrogenase subunit alpha (330 aa).

Substrate is bound by residues phenylalanine 44, tyrosine 73, 107–110, and serine 123; that span reads MPGH. A thiamine diphosphate-binding site is contributed by 72-74; sequence YYR. Thiamine diphosphate is bound by residues 123–125, 153–159, 183–187, and histidine 252; these read SPV, GEGSSNQ, and NKYAI. Residues glutamate 154, asparagine 183, and tyrosine 185 each contribute to the Mg(2+) site. Residues 249–272 are disordered; it reads LTPHSSDDDDSSYRGREEVEEAKK. The span at 259 to 272 shows a compositional bias: basic and acidic residues; that stretch reads SSYRGREEVEEAKK.

It belongs to the BCKDHA family. Heterotetramer of two alpha and two beta chains. Directly associated with ODBB in the E1 complex. Thiamine diphosphate is required as a cofactor.

The catalysed reaction is N(6)-[(R)-lipoyl]-L-lysyl-[protein] + 3-methyl-2-oxobutanoate + H(+) = N(6)-[(R)-S(8)-2-methylpropanoyldihydrolipoyl]-L-lysyl-[protein] + CO2. Its function is as follows. The branched-chain alpha-keto dehydrogenase complex catalyzes the overall conversion of alpha-keto acids to acyl-CoA and CO(2). It contains multiple copies of three enzymatic components: branched-chain alpha-keto acid decarboxylase (E1), lipoamide acyltransferase (E2) and lipoamide dehydrogenase (E3). This Bacillus subtilis (strain 168) protein is 2-oxoisovalerate dehydrogenase subunit alpha (bfmBAA).